Here is a 90-residue protein sequence, read N- to C-terminus: Putative ATPase inhibitor, mitochondrial (90 aa).

The stretch at 42–89 (ESREKAKEDFFVHQHEIEQLRKLKESLKLHREELDELESRVDKKMKSN) forms a coiled coil.

It belongs to the ATPase inhibitor family.

It is found in the mitochondrion. Its function is as follows. Forms a one-to-one complex with ATPase to inhibit the enzyme activity completely. This Schizosaccharomyces pombe (strain 972 / ATCC 24843) (Fission yeast) protein is Putative ATPase inhibitor, mitochondrial (inh1).